A 273-amino-acid chain; its full sequence is Urease accessory protein UreD (273 aa).

This sequence belongs to the UreD family. UreD, UreF and UreG form a complex that acts as a GTP-hydrolysis-dependent molecular chaperone, activating the urease apoprotein by helping to assemble the nickel containing metallocenter of UreC. The UreE protein probably delivers the nickel.

It localises to the cytoplasm. Its function is as follows. Required for maturation of urease via the functional incorporation of the urease nickel metallocenter. This is Urease accessory protein UreD from Mycolicibacterium gilvum (strain PYR-GCK) (Mycobacterium gilvum (strain PYR-GCK)).